A 314-amino-acid chain; its full sequence is MPRISTSLIRKASRIRPGLHLLLPECRTLEQAKLEYKWLTEELPPDKSIRWACLQRYKHVPLQYILRSQPFGALDIVCKPGVLIPRWETEEWVMAIIRALNNSMLSRHTIPLHICDTFTGTGCIALALSHGIANCTFTAIDVSTRAIKLVKENMLKNKVSGGKLVQHNILSSKASDEYPSHIDILTGNPPYIRKRDFNRDVKTSVKLFEPRLALVGELECYINLVNYWLPKTDSFFYEIGDVEQFNYVERRIKEDSYLSRIWSIGLKYDSNGKARVVYGFKATPKGRILHQIFASFGTIRHLATALSGHKANCN.

Residues phenylalanine 118 to glycine 122, aspartate 141, and asparagine 188 contribute to the S-adenosyl-L-methionine site. Asparagine 188–tyrosine 191 is a substrate binding site.

The protein belongs to the protein N5-glutamine methyltransferase family.

It is found in the mitochondrion. The catalysed reaction is L-glutaminyl-[peptide chain release factor] + S-adenosyl-L-methionine = N(5)-methyl-L-glutaminyl-[peptide chain release factor] + S-adenosyl-L-homocysteine + H(+). Methylates MRF1 on 'Gln-287' using S-adenosyl L-methionine as methyl donor. The protein is Mitochondrial MRF1 N(5)-glutamine methyltransferase MTQ1 (MTQ1) of Saccharomyces cerevisiae (strain ATCC 204508 / S288c) (Baker's yeast).